Consider the following 296-residue polypeptide: MTAKSKFRGSFTALVTPFKNGGLDEAAFRGLVSWQIAEGTHGLVPVGTTGESPTVTHDEHKQLVEWCVDEAKARVPVIAGAGSNSTAEAIGLAKHAEKVGAAAVLVVTPYYNKPTQEGLYQHFKAVNDAIGIPIIIYNIPGRSVVDMSTDTMKRLFELKNISGVKDATANIARVSAQRAAMGEDFNQLSGEDITALGYMAHGGHGCISVTSNVAPRLCSEFQTACLKGDYATALKIQDKLVPLHTNLFIEANPAPVKYALSLLGKMSNTLRLPMVELSEANREIVRQSMVHAGLLN.

Pyruvate is bound at residue Thr49. The active-site Proton donor/acceptor is Tyr137. Residue Lys165 is the Schiff-base intermediate with substrate of the active site. Ile207 provides a ligand contact to pyruvate.

The protein belongs to the DapA family. Homotetramer; dimer of dimers.

The protein resides in the cytoplasm. The enzyme catalyses L-aspartate 4-semialdehyde + pyruvate = (2S,4S)-4-hydroxy-2,3,4,5-tetrahydrodipicolinate + H2O + H(+). It participates in amino-acid biosynthesis; L-lysine biosynthesis via DAP pathway; (S)-tetrahydrodipicolinate from L-aspartate: step 3/4. Functionally, catalyzes the condensation of (S)-aspartate-beta-semialdehyde [(S)-ASA] and pyruvate to 4-hydroxy-tetrahydrodipicolinate (HTPA). The polypeptide is 4-hydroxy-tetrahydrodipicolinate synthase (Afipia carboxidovorans (strain ATCC 49405 / DSM 1227 / KCTC 32145 / OM5) (Oligotropha carboxidovorans)).